Consider the following 177-residue polypeptide: Nucleoside triphosphate/diphosphate phosphatase (177 aa).

Arg-23 functions as the Proton donor in the catalytic mechanism. Mg(2+) contacts are provided by Asn-87, Asp-103, Asp-105, Asp-107, Asp-120, and Glu-123.

The protein belongs to the Ntdp family. Mg(2+) serves as cofactor.

The catalysed reaction is a ribonucleoside 5'-triphosphate + H2O = a ribonucleoside 5'-diphosphate + phosphate + H(+). The enzyme catalyses a ribonucleoside 5'-diphosphate + H2O = a ribonucleoside 5'-phosphate + phosphate + H(+). Its function is as follows. Has nucleoside phosphatase activity towards nucleoside triphosphates and nucleoside diphosphates. In Streptococcus thermophilus (strain CNRZ 1066), this protein is Nucleoside triphosphate/diphosphate phosphatase.